Here is a 243-residue protein sequence, read N- to C-terminus: DNA repair protein RecO (243 aa).

The protein belongs to the RecO family.

Functionally, involved in DNA repair and RecF pathway recombination. This is DNA repair protein RecO from Bartonella quintana (strain Toulouse) (Rochalimaea quintana).